The primary structure comprises 330 residues: MGDLSIQNLVVEYYSGGYALRPINGLNLDVAAGSLVMLLGPSGCGKTTLLSCLGGILRPKSGAIKFDEVDITTLQGAELANYRRNKVGIVFQAFNLVPSLTAVENVMVPLRSAGMSRRASRRRAEELLARVNLAERMNHRPGDLSGGQQQRVAVARAIALDPPLILADEPTAHLDFIQVEEVLRLIRELADGERVVVVATHDSRMLPMADRVVELTPDFAETNRPPETVHLQAGEVLFEQSTMGDLIYVVSEGEFEIVHELADGGEELVKVAGPGDYFGEIGVLFHLPRSATVRARSDATAVGYTVQAFRERLGVGGLRDLIEHRALAND.

In terms of domain architecture, ABC transporter spans 4–242; it reads LSIQNLVVEY…AGEVLFEQST (239 aa). Residue 40-47 participates in ATP binding; sequence GPSGCGKT. 210-330 provides a ligand contact to a nucleoside 3',5'-cyclic phosphate; it reads DRVVELTPDF…LIEHRALAND (121 aa).

The protein belongs to the ABC transporter superfamily. As to quaternary structure, the complex is composed of two ATP-binding proteins (MT0079), two transmembrane proteins (MT0078) and a solute-binding protein.

Its function is as follows. Probably part of an ABC transporter complex. Probably responsible for energy coupling to the transport system. This is an uncharacterized protein from Mycobacterium tuberculosis (strain CDC 1551 / Oshkosh).